Consider the following 882-residue polypeptide: DNA mismatch repair protein MutS (882 aa).

635–642 contacts ATP; that stretch reads GPNMGGKS.

Belongs to the DNA mismatch repair MutS family.

This protein is involved in the repair of mismatches in DNA. It is possible that it carries out the mismatch recognition step. This protein has a weak ATPase activity. In Janthinobacterium sp. (strain Marseille) (Minibacterium massiliensis), this protein is DNA mismatch repair protein MutS.